The chain runs to 597 residues: Aspartate--tRNA(Asp/Asn) ligase (597 aa).

Glu-175 is a binding site for L-aspartate. Positions 199 to 202 are aspartate; the sequence is QQYK. Arg-221 and His-454 together coordinate L-aspartate. Residue 221-223 coordinates ATP; that stretch reads RDE. Glu-488 contributes to the ATP binding site. Arg-495 provides a ligand contact to L-aspartate. Residue 540-543 coordinates ATP; the sequence is GIDR.

It belongs to the class-II aminoacyl-tRNA synthetase family. Type 1 subfamily. In terms of assembly, homodimer.

It localises to the cytoplasm. The catalysed reaction is tRNA(Asx) + L-aspartate + ATP = L-aspartyl-tRNA(Asx) + AMP + diphosphate. In terms of biological role, aspartyl-tRNA synthetase with relaxed tRNA specificity since it is able to aspartylate not only its cognate tRNA(Asp) but also tRNA(Asn). Reaction proceeds in two steps: L-aspartate is first activated by ATP to form Asp-AMP and then transferred to the acceptor end of tRNA(Asp/Asn). In Bartonella tribocorum (strain CIP 105476 / IBS 506), this protein is Aspartate--tRNA(Asp/Asn) ligase.